Reading from the N-terminus, the 141-residue chain is Zinc finger protein 593 homolog (141 aa).

Residues Met1 to Gln32 are disordered. The segment covering Thr10–Asn25 has biased composition (basic residues). The C2H2-type zinc finger occupies Asn60–His84.

Belongs to the ZNF593/BUD20 C2H2-type zinc-finger protein family. As to quaternary structure, associates with pre-60S ribosomal particles; released from the pre-60S particle very early in the cytoplasm.

It is found in the nucleus. Its subcellular location is the cytoplasm. Functionally, involved in pre-60S ribosomal particles maturation by promoting the nuclear export of the 60S ribosome. The chain is Zinc finger protein 593 homolog from Dictyostelium discoideum (Social amoeba).